The following is a 579-amino-acid chain: Nuclear receptor subfamily 1 group D member 2 (579 aa).

Residues 1 to 60 (MEVNAGGVIAYISSSSSASSPASCHSEGSENSFQSSSSSVPSSPNSSNSDTNGNPKNGDL) form a required for phosphorylation by CSNK1E and cytoplasmic localization region. The interval 1 to 99 (MEVNAGGVIA…HSGVTKFSGM (99 aa)) is modulating. Over residues 13-54 (SSSSSASSPASCHSEGSENSFQSSSSSVPSSPNSSNSDTNGN) the composition is skewed to low complexity. Residues 13-61 (SSSSSASSPASCHSEGSENSFQSSSSSVPSSPNSSNSDTNGNPKNGDLA) are disordered. A Phosphoserine; by GSK3-beta modification is found at S46. Positions 100-176 (VLLCKVCGDV…VGMSRDAVRF (77 aa)) form a DNA-binding region, nuclear receptor. 2 consecutive NR C4-type zinc fingers follow at residues 103-123 (CKVCGDVASGFHYGVHACEGC) and 140-164 (CLKNENCSIMRMNRNRCQQCRFKKC). 2 positions are modified to N6-acetyllysine; by KAT5: K162 and K163. The interval 222 to 250 (PAQEQLRPKPQLEQENIKSSSPPSSDFAK) is disordered. Residues 227 to 237 (LRPKPQLEQEN) show a composition bias toward basic and acidic residues. 2 cysteine pairs are disulfide-bonded: C337/C343 and C374/C384. In terms of domain architecture, NR LBD spans 369–579 (KNSYLCNTGG…EELLAFKVHP (211 aa)). Heme-binding residues include C384 and H568. An interaction with ZNHIT1 region spans residues 397–579 (SGHEIWEEFS…EELLAFKVHP (183 aa)).

The protein belongs to the nuclear hormone receptor family. NR1 subfamily. As to quaternary structure, binds DNA as a monomer or a homodimer. Interacts with NCOA5 coactivator, leading to a strong increase of transcription of target genes. Interacts (via N-terminus) with KAT5. Interacts (via C-terminus) with HDAC1. Interacts with ZNHIT1. Interacts with SIAH2. Deacetylated by HDAC1. Acetylation and deacetylation regulate its transcriptional regulatory activity. Post-translationally, under more reducing intracellular redox conditions, Cys-384 is in its heme-bound state, which is optimal for recruitment of the NCOR1/HDAC3 corepressor complex and repression of target genes. When subjected to oxidative stress conditions, Cys-384 undergoes oxidation to form a disulfide bridge with Cys-374, also triggering a ligand switch that results in release of bound heme and derepression of target genes. In terms of processing, ubiquitinated by SIAH2; leading to proteasomal degradation. Phosphorylated by CSNK1E; phosphorylation enhances its cytoplasmic localization. As to expression, widely expressed. Expressed at high levels in the liver, adipose tissue, skeletal muscle and brain. Expression oscillates diurnally in the suprachiasmatic nucleus (SCN) of the hypothalamus as well as in peripheral tissues.

It localises to the nucleus. The protein resides in the cytoplasm. The heme-bound form can bind gaseous signaling molecules such as CO and nitric oxide (NO) and NO can reverse its transcriptional repressor activity. Functionally, transcriptional repressor which coordinates circadian rhythm and metabolic pathways in a heme-dependent manner. Integral component of the complex transcription machinery that governs circadian rhythmicity and forms a critical negative limb of the circadian clock by directly repressing the expression of core clock components BMAL1 and CLOCK. Also regulates genes involved in metabolic functions, including lipid metabolism and the inflammatory response. Acts as a receptor for heme which stimulates its interaction with the NCOR1/HDAC3 corepressor complex, enhancing transcriptional repression. Recognizes two classes of DNA response elements within the promoter of its target genes and can bind to DNA as either monomers or homodimers, depending on the nature of the response element. Binds as a monomer to a response element composed of the consensus half-site motif 5'-[A/G]GGTCA-3' preceded by an A/T-rich 5' sequence (RevRE), or as a homodimer to a direct repeat of the core motif spaced by two nuclegotides (RevDR-2). Acts as a potent competitive repressor of ROR alpha (RORA) function and also negatively regulates the expression of NR1D1. Regulates lipid and energy homeostasis in the skeletal muscle via repression of genes involved in lipid metabolism and myogenesis including: CD36, FABP3, FABP4, UCP3, SCD1 and MSTN. Regulates hepatic lipid metabolism via the repression of APOC3. Represses gene expression at a distance in macrophages by inhibiting the transcription of enhancer-derived RNAs (eRNAs). In addition to its activity as a repressor, can also act as a transcriptional activator. Acts as a transcriptional activator of the sterol regulatory element-binding protein 1 (SREBF1) and the inflammatory mediator interleukin-6 (IL6) in the skeletal muscle. Plays a role in the regulation of circadian sleep/wake cycle; essential for maintaining wakefulness during the dark phase or active period. Key regulator of skeletal muscle mitochondrial function; negatively regulates the skeletal muscle expression of core clock genes and genes involved in mitochondrial biogenesis, fatty acid beta-oxidation and lipid metabolism. May play a role in the circadian control of neutrophilic inflammation in the lung. The sequence is that of Nuclear receptor subfamily 1 group D member 2 from Homo sapiens (Human).